Here is a 128-residue protein sequence, read N- to C-terminus: Small ribosomal subunit protein uS14m (128 aa).

Belongs to the universal ribosomal protein uS14 family. As to quaternary structure, component of the mitochondrial small ribosomal subunit (mt-SSU). Mature mammalian 55S mitochondrial ribosomes consist of a small (28S) and a large (39S) subunit. The 28S small subunit contains a 12S ribosomal RNA (12S mt-rRNA) and 30 different proteins. The 39S large subunit contains a 16S rRNA (16S mt-rRNA), a copy of mitochondrial valine transfer RNA (mt-tRNA(Val)), which plays an integral structural role, and 52 different proteins. Interacts with LIAT1.

Its subcellular location is the mitochondrion. The polypeptide is Small ribosomal subunit protein uS14m (Homo sapiens (Human)).